The chain runs to 1052 residues: Focal adhesion kinase 1 (1052 aa).

Positions 1–27 (MAAAYLDPNLNHTPNSSTKTHLGTGME) are disordered. An N-acetylalanine modification is found at Ala2. A Phosphotyrosine modification is found at Tyr5. Positions 10–21 (LNHTPNSSTKTH) are enriched in polar residues. At Thr13 the chain carries Phosphothreonine. A phosphoserine mark is found at Ser29 and Ser54. Residues 35–355 (RVLKVFHYFE…GYCRLVNGTS (321 aa)) enclose the FERM domain. Residue Lys152 forms a Glycyl lysine isopeptide (Lys-Gly) (interchain with G-Cter in SUMO) linkage. Residue Tyr397 is modified to Phosphotyrosine; by autocatalysis. The residue at position 407 (Tyr407) is a Phosphotyrosine. In terms of domain architecture, Protein kinase spans 422 to 680 (IELGRCIGEG…ELKAQLSTIL (259 aa)). ATP contacts are provided by residues 428–434 (IGEGQFG), Lys454, and 500–502 (ELC). Catalysis depends on Asp546, which acts as the Proton acceptor. Position 570 is a phosphotyrosine (Tyr570). Residues Tyr576 and Tyr577 each carry the phosphotyrosine; by RET and SRC modification. Phosphoserine is present on Ser580. Basic and acidic residues predominate over residues 684–697 (KAQQEERMRMESRR). Disordered regions lie at residues 684–734 (KAQQ…PSPQ) and 839–922 (LSRG…RSND). An interaction with TGFB1I1 region spans residues 707–1052 (GSDEAPPKPS…LKMLGQTRPH (346 aa)). Ser722 is subject to Phosphoserine. A Phosphoserine; by CDK5 modification is found at Ser732. Residues 839-849 (LSRGSIDREDG) show a composition bias toward basic and acidic residues. The residue at position 843 (Ser843) is a Phosphoserine. Tyr861 carries the post-translational modification Phosphotyrosine. Residues 869–880 (PAAPPKKPPRPG) are compositionally biased toward pro residues. Phosphoserine is present on residues Ser887 and Ser910. Residues 912 to 1052 (PPTANLDRSN…LKMLGQTRPH (141 aa)) form an interaction with ARHGEF28 region. Thr914 is subject to Phosphothreonine. Position 925 is a phosphotyrosine (Tyr925).

Belongs to the protein kinase superfamily. Tyr protein kinase family. FAK subfamily. Interacts (via first Pro-rich region) with CAS family members (via SH3 domain), including BCAR1, BCAR3, and CASS4. Interacts with NEDD9 (via SH3 domain). Interacts with GIT1. Interacts with SORBS1. Interacts with ARHGEF28. Interacts with SHB. Part of a complex composed of THSD1, PTK2/FAK1, TLN1 and VCL. Interacts with PXN and TLN1. Interacts with STAT1. Interacts with DCC. Interacts with WASL. Interacts with ARHGEF7. Interacts with GRB2 and GRB7. Component of a complex that contains at least FER, CTTN and PTK2/FAK1. Interacts with BMX. Interacts with TGFB1I1. Interacts with STEAP4. Interacts with ZFYVE21. Interacts with ESR1. Interacts with PIK3R1 or PIK3R2. Interacts with SRC, FGR, FLT4 and RET. Interacts with EPHA2 in resting cells; activation of EPHA2 recruits PTPN11, leading to dephosphorylation of PTK2/FAK1 and dissociation of the complex. Interacts with EPHA1 (kinase activity-dependent). Interacts with CD4; this interaction requires the presence of HIV-1 gp120. Interacts with PIAS1. Interacts with ARHGAP26 and SHC1. Interacts with RB1CC1; this inhibits PTK2/FAK1 activity and activation of downstream signaling pathways. Interacts with P53/TP53 and MDM2. Interacts with LPXN (via LD motif 3). Interacts with MISP. Interacts with CIB1 isoform 2. Interacts with CD36. Interacts with EMP2; regulates PTK2 activation and localization. Interacts with DSCAM. Interacts with AMBRA1. Interacts (when tyrosine-phosphorylated) with tensin TNS1; the interaction is increased by phosphorylation of TNS1. Post-translationally, phosphorylated on tyrosine residues upon activation, e.g. upon integrin signaling. Tyr-397 is the major autophosphorylation site, but other kinases can also phosphorylate this residue. Phosphorylation at Tyr-397 promotes interaction with SRC and SRC family members, leading to phosphorylation at Tyr-576, Tyr-577 and at additional tyrosine residues. FGR promotes phosphorylation at Tyr-397 and Tyr-576. FER promotes phosphorylation at Tyr-577, Tyr-861 and Tyr-925, even when cells are not adherent. Tyr-397, Tyr-576 and Ser-722 are phosphorylated only when cells are adherent. Phosphorylation at Tyr-397 is important for interaction with BMX, PIK3R1 and SHC1. Phosphorylation at Tyr-925 is important for interaction with GRB2. Dephosphorylated by PTPN11; PTPN11 is recruited to PTK2 via EPHA2 (tyrosine phosphorylated). Microtubule-induced dephosphorylation at Tyr-397 is crucial for the induction of focal adhesion disassembly; this dephosphorylation could be catalyzed by PTPN11 and regulated by ZFYVE21. Phosphorylation on tyrosine residues is enhanced by NTN1. Sumoylated; this enhances autophosphorylation. As to expression, detected in B and T-lymphocytes. Isoform 1 and isoform 6 are detected in lung fibroblasts (at protein level). Ubiquitous. Expressed in epithelial cells (at protein level).

The protein localises to the cell junction. It localises to the focal adhesion. Its subcellular location is the cell membrane. The protein resides in the cytoplasm. It is found in the perinuclear region. The protein localises to the cell cortex. It localises to the cytoskeleton. Its subcellular location is the microtubule organizing center. The protein resides in the centrosome. It is found in the nucleus. The protein localises to the cilium basal body. It catalyses the reaction L-tyrosyl-[protein] + ATP = O-phospho-L-tyrosyl-[protein] + ADP + H(+). With respect to regulation, subject to autoinhibition, mediated by interactions between the FERM domain and the kinase domain. Activated by autophosphorylation at Tyr-397. This promotes interaction with SRC and phosphorylation at Tyr-576 and Tyr-577 in the kinase activation loop. Phosphorylation at Tyr-576 and Tyr-577 is required for maximal kinase activity. Inhibited by TAC544, TAE226, PF-573,228 and PF-562,271. In terms of biological role, non-receptor protein-tyrosine kinase that plays an essential role in regulating cell migration, adhesion, spreading, reorganization of the actin cytoskeleton, formation and disassembly of focal adhesions and cell protrusions, cell cycle progression, cell proliferation and apoptosis. Required for early embryonic development and placenta development. Required for embryonic angiogenesis, normal cardiomyocyte migration and proliferation, and normal heart development. Regulates axon growth and neuronal cell migration, axon branching and synapse formation; required for normal development of the nervous system. Plays a role in osteogenesis and differentiation of osteoblasts. Functions in integrin signal transduction, but also in signaling downstream of numerous growth factor receptors, G-protein coupled receptors (GPCR), EPHA2, netrin receptors and LDL receptors. Forms multisubunit signaling complexes with SRC and SRC family members upon activation; this leads to the phosphorylation of additional tyrosine residues, creating binding sites for scaffold proteins, effectors and substrates. Regulates numerous signaling pathways. Promotes activation of phosphatidylinositol 3-kinase and the AKT1 signaling cascade. Promotes activation of MAPK1/ERK2, MAPK3/ERK1 and the MAP kinase signaling cascade. Promotes localized and transient activation of guanine nucleotide exchange factors (GEFs) and GTPase-activating proteins (GAPs), and thereby modulates the activity of Rho family GTPases. Signaling via CAS family members mediates activation of RAC1. Phosphorylates NEDD9 following integrin stimulation. Recruits the ubiquitin ligase MDM2 to P53/TP53 in the nucleus, and thereby regulates P53/TP53 activity, P53/TP53 ubiquitination and proteasomal degradation. Phosphorylates SRC; this increases SRC kinase activity. Phosphorylates ACTN1, ARHGEF7, GRB7, RET and WASL. Promotes phosphorylation of PXN and STAT1; most likely PXN and STAT1 are phosphorylated by a SRC family kinase that is recruited to autophosphorylated PTK2/FAK1, rather than by PTK2/FAK1 itself. Promotes phosphorylation of BCAR1; GIT2 and SHC1; this requires both SRC and PTK2/FAK1. Promotes phosphorylation of BMX and PIK3R1. Isoform 6 (FRNK) does not contain a kinase domain and inhibits PTK2/FAK1 phosphorylation and signaling. Its enhanced expression can attenuate the nuclear accumulation of LPXN and limit its ability to enhance serum response factor (SRF)-dependent gene transcription. Isoform 6 (FRNK) does not contain a kinase domain and inhibits PTK2/FAK1 phosphorylation and signaling. Its enhanced expression can attenuate the nuclear accumulation of LPXN and limit its ability to enhance serum response factor (SRF)-dependent gene transcription. This chain is Focal adhesion kinase 1, found in Homo sapiens (Human).